The sequence spans 89 residues: Small ribosomal subunit protein uS15 (89 aa).

The tract at residues 1-23 (MSLGTEEKQNLINTHQVHPTDTG) is disordered. The segment covering 10–23 (NLINTHQVHPTDTG) has biased composition (polar residues).

Belongs to the universal ribosomal protein uS15 family. Part of the 30S ribosomal subunit. Forms a bridge to the 50S subunit in the 70S ribosome, contacting the 23S rRNA.

Its function is as follows. One of the primary rRNA binding proteins, it binds directly to 16S rRNA where it helps nucleate assembly of the platform of the 30S subunit by binding and bridging several RNA helices of the 16S rRNA. Forms an intersubunit bridge (bridge B4) with the 23S rRNA of the 50S subunit in the ribosome. This Prochlorococcus marinus (strain NATL2A) protein is Small ribosomal subunit protein uS15.